Reading from the N-terminus, the 303-residue chain is UDP-N-acetylenolpyruvoylglucosamine reductase (303 aa).

In terms of domain architecture, FAD-binding PCMH-type spans 27–217 (KVGGISQVFY…QTVRKLTQPI (191 aa)). Arginine 175 is a catalytic residue. Serine 224 acts as the Proton donor in catalysis. The active site involves glutamate 294.

Belongs to the MurB family. FAD serves as cofactor.

It localises to the cytoplasm. It carries out the reaction UDP-N-acetyl-alpha-D-muramate + NADP(+) = UDP-N-acetyl-3-O-(1-carboxyvinyl)-alpha-D-glucosamine + NADPH + H(+). It participates in cell wall biogenesis; peptidoglycan biosynthesis. Its function is as follows. Cell wall formation. In Orientia tsutsugamushi (strain Ikeda) (Rickettsia tsutsugamushi), this protein is UDP-N-acetylenolpyruvoylglucosamine reductase.